Here is a 104-residue protein sequence, read N- to C-terminus: Large ribosomal subunit protein uL23 (104 aa).

Belongs to the universal ribosomal protein uL23 family. Part of the 50S ribosomal subunit. Contacts protein L29, and trigger factor when it is bound to the ribosome.

In terms of biological role, one of the early assembly proteins it binds 23S rRNA. One of the proteins that surrounds the polypeptide exit tunnel on the outside of the ribosome. Forms the main docking site for trigger factor binding to the ribosome. The chain is Large ribosomal subunit protein uL23 from Cupriavidus metallidurans (strain ATCC 43123 / DSM 2839 / NBRC 102507 / CH34) (Ralstonia metallidurans).